The sequence spans 310 residues: D-alanine--D-alanine ligase (310 aa).

An ATP-grasp domain is found at 105-301; the sequence is KQAFVSAGIL…FEELVERIIL (197 aa). ATP is bound at residue 133 to 186; sequence SFGLPLVVKPVQEGSSVGISIVKEESQLAAAVKLAFRHDDEILVEQFIKGQEVQ. Mg(2+) is bound by residues aspartate 254, glutamate 267, and asparagine 269.

This sequence belongs to the D-alanine--D-alanine ligase family. It depends on Mg(2+) as a cofactor. The cofactor is Mn(2+).

The protein localises to the cytoplasm. It carries out the reaction 2 D-alanine + ATP = D-alanyl-D-alanine + ADP + phosphate + H(+). It participates in cell wall biogenesis; peptidoglycan biosynthesis. Functionally, cell wall formation. This Pelobacter propionicus (strain DSM 2379 / NBRC 103807 / OttBd1) protein is D-alanine--D-alanine ligase.